The chain runs to 166 residues: Short form salivary protein D7R1 (166 aa).

The first 21 residues, 1–21 (MFRKVFSVALVTCGLLVIVQA), serve as a signal peptide directing secretion.

This sequence belongs to the PBP/GOBP family. Interacts with host coagulation factor XII (F12) (inactive and activated) (via amino acids 1-77). Interacts with host high molecular weight kininogen (KNG1) (via amino acids 402-532). Female salivary gland (at protein level).

The protein resides in the secreted. With respect to regulation, zn(2+) modulates binding to host coagulation factor XII (F12) and high molecular weight kininogen (KNG1). Functionally, salivary protein with anticoagulant activity that targets the intrinsic blood coagulation pathway in the host. Inhibits activation of the host plasma contact system by preventing the reciprocal activation of host coagulation factor XII (F12) and prekallikrein (KLKB1). Attenuates generation of bradykinin in host plasma. May bind and sequester different mediators involved in the host response, such as serotonin and histamine. The protein is Short form salivary protein D7R1 of Anopheles stephensi (Indo-Pakistan malaria mosquito).